The chain runs to 161 residues: Anaerobic nitrite reductase HB2 (161 aa).

The Globin domain maps to Val-5 to Lys-154. A Homodimerization motif is present at residues Glu-38 to Ala-42. Residues Ser-48, Lys-62, His-66, and His-101 each coordinate heme b. Residues Asp-108 to Arg-120 carry the Homodimerization motif.

It belongs to the plant globin family. As to quaternary structure, homodimer. Requires heme b as cofactor.

The protein localises to the cytoplasm. It is found in the nucleus. The catalysed reaction is Fe(III)-heme b-[protein] + nitric oxide + H2O = Fe(II)-heme b-[protein] + nitrite + 2 H(+). Functionally, phytoglobin that reduces nitrite to nitric oxide (NO) under anoxic conditions (e.g. during flooding or in waterlogged soil). May not function as an oxygen storage or transport protein. Has an unusually high affinity for O(2) through an hexacoordinate heme iron because of a very low dissociation constant. This chain is Anaerobic nitrite reductase HB2, found in Brassica napus (Rape).